A 684-amino-acid chain; its full sequence is Glycine--tRNA ligase beta subunit (684 aa).

Belongs to the class-II aminoacyl-tRNA synthetase family. As to quaternary structure, tetramer of two alpha and two beta subunits.

Its subcellular location is the cytoplasm. It catalyses the reaction tRNA(Gly) + glycine + ATP = glycyl-tRNA(Gly) + AMP + diphosphate. In Stutzerimonas stutzeri (strain A1501) (Pseudomonas stutzeri), this protein is Glycine--tRNA ligase beta subunit.